The sequence spans 802 residues: Osmosensitive cation channel TMEM63C (802 aa).

The Extracellular segment spans residues 1–35 (MTASPESMGQKFRNMTANECFQSRSTVLQGQPFGG). Residues 36 to 60 (IPTVLLLNIILWVCVVLVYSFLRKA) traverse the membrane as a helical segment. Residues 61 to 124 (AWDYGRLALL…RDRDLINKCG (64 aa)) lie on the Cytoplasmic side of the membrane. Phosphoserine is present on residues serine 75 and serine 78. A helical transmembrane segment spans residues 125-157 (EDARIYIMFQYHLIIFVLILCIPSLGIILPVNY). Over 158–180 (IGSALDWSSHFGRTTIVNVSTES) the chain is Extracellular. The chain crosses the membrane as a helical span at residues 181 to 205 (QFLWLHSIFAFMYFLTNFAFMGHHC). Over 206 to 401 (LGFVPKKNLH…IIWKHLSIRR (196 aa)) the chain is Cytoplasmic. Residues 402 to 431 (FSWWARFIAINTSLFFLFFFLTTPAIIINT) form a helical membrane-spanning segment. Residues 432–446 (IDMYNVTRPIEKLQS) are Extracellular-facing. A helical transmembrane segment spans residues 447–476 (PVVTQFFPSVLLWAFTVIMPLLVYFSAFLE). The Cytoplasmic segment spans residues 477–480 (AHWT). Residues 481-517 (RSNQNLIIMYKCYIFLVFMVVILPSMGLTSLDVFLRW) traverse the membrane as a helical segment. Over 518–540 (LFDIYYLEHATIRFQCVFLPDNG) the chain is Extracellular. A helical transmembrane segment spans residues 541-573 (AFFINYVITSALFGTGMELMRLGSLCTYCTRLF). Over 574 to 593 (LSRSEPERVHIRKNLAMDFQ) the chain is Cytoplasmic. Residues 594 to 612 (FGREYAWMLNVFSVVMAYS) traverse the membrane as a helical segment. At 613–615 (ITC) the chain is on the extracellular side. Residues 616 to 640 (PIIVPFGLLYLCMKHITDRYNMYYS) form a helical membrane-spanning segment. Over 641–647 (YAPTKLN) the chain is Cytoplasmic. A helical transmembrane segment spans residues 648 to 676 (AQIHMAAVYQAIFAPLLGLFWMLFFSILR). Over 677-681 (VGSLH) the chain is Extracellular. The helical transmembrane segment at 682 to 702 (SITLFSLSSIIISVIIAFSGV) threads the bilayer. The Cytoplasmic segment spans residues 703 to 802 (FLGKFRIAQQ…EGLELEGQSH (100 aa)). The interval 753 to 785 (TPASSPARHTYGTMNSQPEEGEEESGLRGFARE) is disordered.

The protein belongs to the CSC1 (TC 1.A.17) family. Monomer. In terms of tissue distribution, expressed in podocytes of kidney glomeruli.

It localises to the endoplasmic reticulum membrane. It is found in the cell membrane. It carries out the reaction Ca(2+)(in) = Ca(2+)(out). In terms of biological role, acts as an osmosensitive cation channel preferentially activated upon hypotonic stress. In contrast to TMEM63B, does not show phospholipid scramblase activity. Enriched in mitochondria-ER contact sites where it may regulate the metabolite flux and organelles' morphologies in response to osmotic changes. In particular may regulate mitochondrial motility and function in motor neuron axons. Required for the functional integrity of the kidney glomerular filtration barrier. This Rattus norvegicus (Rat) protein is Osmosensitive cation channel TMEM63C (Tmem63c).